A 308-amino-acid chain; its full sequence is Cysteine synthase (308 aa).

N6-(pyridoxal phosphate)lysine is present on Lys-45. Pyridoxal 5'-phosphate contacts are provided by residues Asn-75, Gly-179–Thr-183, and Ser-267.

Belongs to the cysteine synthase/cystathionine beta-synthase family. As to quaternary structure, homodimer. Forms CymR(2):CysK(2) or CymR(4):CysK(4) complexes in the absence of O-acetylserine. It depends on pyridoxal 5'-phosphate as a cofactor.

It catalyses the reaction O-acetyl-L-serine + hydrogen sulfide = L-cysteine + acetate. Its pathway is amino-acid biosynthesis; L-cysteine biosynthesis; L-cysteine from L-serine: step 2/2. In terms of biological role, catalyzes the conversion of O-acetylserine to cysteine. Also acts as a sensor of cysteine availability in the signal transduction pathway modulating CymR activity. When cysteine is present, the pool of O-acetylserine (OAS) is low, which leads to the formation of a CymR-CysK complex and transcriptional repression of the CymR regulon occurs. In the absence of cysteine, the OAS pool is high and the CymR-CysK complex is mostly dissociated, leading to a faster dissociation of CymR from its DNA targets and the lifting of CymR-dependent repression. This chain is Cysteine synthase (cysK), found in Bacillus subtilis (strain 168).